The sequence spans 421 residues: Protein MID1-COMPLEMENTING ACTIVITY 1 (421 aa).

A coiled-coil region spans residues 188 to 218 (RFCEALKTENEKLQIELQRSQEHYDVAQCEV). Residues 233–288 (EPDSEKELTKKASKKSERSSSMKTEYSYDEDSPKKSSTRAASRSTSNVSSGHDLLS) form a disordered region. Positions 235-252 (DSEKELTKKASKKSERSS) are enriched in basic and acidic residues. Positions 270–282 (TRAASRSTSNVSS) are enriched in low complexity. The helical transmembrane segment at 346–362 (LMAYSLILSCCCYTCCV) threads the bilayer.

In terms of tissue distribution, expressed in roots, leaves, stems, flowers and siliques. Expressed in vascular tissues of cotyledons, leaves and primary root, in the promeristem and adjacent elongation zone of the primary root and in the shoot apical meristem. Detected in the stele and endodermis, but not in the cortex, epidermis or root cap, including the columella. Not expressed in root hairs or in mesophyll cells of leaves and cotyledons.

Its subcellular location is the cell membrane. Inhibited by GdCl(3), but not by verapamil. Calcium-permeable stretch-activated channel component. Involved in mechano-stimulated calcium uptake mechanism and in mechanosensing in the primary root. The chain is Protein MID1-COMPLEMENTING ACTIVITY 1 (MCA1) from Arabidopsis thaliana (Mouse-ear cress).